A 366-amino-acid polypeptide reads, in one-letter code: Histidinol-phosphate aminotransferase (366 aa).

Position 228 is an N6-(pyridoxal phosphate)lysine (Lys-228).

The protein belongs to the class-II pyridoxal-phosphate-dependent aminotransferase family. Histidinol-phosphate aminotransferase subfamily. In terms of assembly, homodimer. The cofactor is pyridoxal 5'-phosphate.

It catalyses the reaction L-histidinol phosphate + 2-oxoglutarate = 3-(imidazol-4-yl)-2-oxopropyl phosphate + L-glutamate. The protein operates within amino-acid biosynthesis; L-histidine biosynthesis; L-histidine from 5-phospho-alpha-D-ribose 1-diphosphate: step 7/9. This chain is Histidinol-phosphate aminotransferase, found in Corynebacterium diphtheriae (strain ATCC 700971 / NCTC 13129 / Biotype gravis).